The chain runs to 143 residues: MFLGTYTPKLDDKGRLTLPAKFRDALAGGLMVTKSQDHSLAVYPRAEFEKLARRASQASRSNPEARAFLRNLAAATDEQHPDAQGRITLSADHRRYASLSKECVVIGSVDYLEIWDAAAWQEYQQAHEENFSAATDETLRDII.

SpoVT-AbrB domains follow at residues 5–47 (TYTP…PRAE) and 76–119 (TDEQ…DAAA).

This sequence belongs to the MraZ family. Forms oligomers.

Its subcellular location is the cytoplasm. The protein localises to the nucleoid. The sequence is that of Transcriptional regulator MraZ from Mycobacterium sp. (strain JLS).